Reading from the N-terminus, the 181-residue chain is Cell division protein SepF (181 aa).

Acidic residues predominate over residues 18–27 (EDYLDDDDYD). Residues 18 to 42 (EDYLDDDDYDDGRAVGHDDRRAMHE) are disordered. A compositionally biased stretch (basic and acidic residues) spans 28–42 (DGRAVGHDDRRAMHE).

This sequence belongs to the SepF family. Homodimer. Interacts with FtsZ.

It is found in the cytoplasm. In terms of biological role, cell division protein that is part of the divisome complex and is recruited early to the Z-ring. Probably stimulates Z-ring formation, perhaps through the cross-linking of FtsZ protofilaments. Its function overlaps with FtsA. This is Cell division protein SepF from Frankia alni (strain DSM 45986 / CECT 9034 / ACN14a).